A 384-amino-acid polypeptide reads, in one-letter code: Glucans biosynthesis protein C (384 aa).

10 consecutive transmembrane segments (helical) span residues 17–37 (AWLM…THSW), 54–74 (FIHA…SYML), 91–111 (VGIP…ILLQ), 140–160 (LWFL…FTWF), 173–193 (AISL…YAAI), 212–232 (FIVM…LAFI), 240–260 (FTTP…AYLL), 274–294 (TESV…FSLG), 311–331 (ASLF…AYIT), and 338–358 (LIGF…LYEI).

This sequence belongs to the acyltransferase 3 family. OpgC subfamily.

The protein resides in the cell membrane. It functions in the pathway glycan metabolism; osmoregulated periplasmic glucan (OPG) biosynthesis. In terms of biological role, necessary for the succinyl substitution of periplasmic glucans. Could catalyze the transfer of succinyl residues from the cytoplasmic side of the membrane to the nascent glucan backbones on the periplasmic side of the membrane. The polypeptide is Glucans biosynthesis protein C (Salmonella typhi).